The following is a 109-amino-acid chain: uncharacterized protein (109 aa).

A helical membrane pass occupies residues 87–106; sequence WCSVGTAAAVGIFIGALLSM.

It belongs to the ElaB/YgaM/YqjD family. May bind to ribosomes.

The protein resides in the cell inner membrane. This is an uncharacterized protein from Escherichia coli O157:H7.